We begin with the raw amino-acid sequence, 310 residues long: tRNA dimethylallyltransferase (310 aa).

9-16 serves as a coordination point for ATP; it reads GPTAVGKT. Residue 11–16 participates in substrate binding; the sequence is TAVGKT. Residues 34 to 37 are interaction with substrate tRNA; sequence DSMQ.

Belongs to the IPP transferase family. In terms of assembly, monomer. Mg(2+) serves as cofactor.

It catalyses the reaction adenosine(37) in tRNA + dimethylallyl diphosphate = N(6)-dimethylallyladenosine(37) in tRNA + diphosphate. Functionally, catalyzes the transfer of a dimethylallyl group onto the adenine at position 37 in tRNAs that read codons beginning with uridine, leading to the formation of N6-(dimethylallyl)adenosine (i(6)A). The protein is tRNA dimethylallyltransferase of Syntrophomonas wolfei subsp. wolfei (strain DSM 2245B / Goettingen).